A 458-amino-acid polypeptide reads, in one-letter code: UPF0210 protein MJ1665 (458 aa).

The protein belongs to the UPF0210 family.

This is UPF0210 protein MJ1665 from Methanocaldococcus jannaschii (strain ATCC 43067 / DSM 2661 / JAL-1 / JCM 10045 / NBRC 100440) (Methanococcus jannaschii).